The primary structure comprises 158 residues: Small ribosomal subunit protein uS7 (158 aa).

The protein belongs to the universal ribosomal protein uS7 family. In terms of assembly, part of the 30S ribosomal subunit. Contacts proteins S9 and S11.

Its function is as follows. One of the primary rRNA binding proteins, it binds directly to 16S rRNA where it nucleates assembly of the head domain of the 30S subunit. Is located at the subunit interface close to the decoding center, probably blocks exit of the E-site tRNA. This Wolbachia pipientis subsp. Culex pipiens (strain wPip) protein is Small ribosomal subunit protein uS7.